We begin with the raw amino-acid sequence, 574 residues long: Septation ring formation regulator EzrA (574 aa).

The Extracellular segment spans residues 1-7 (MSSGIIL). The chain crosses the membrane as a helical span at residues 8–26 (LIVAIVLLVIIAYLVGVII). Residues 27–574 (RKRNDSLITS…YEKTREHIRF (548 aa)) are Cytoplasmic-facing. Coiled coils occupy residues 102 to 141 (NFIR…EEKN), 274 to 350 (ELVT…ETES), and 459 to 520 (QLEA…SFEA).

Belongs to the EzrA family.

The protein localises to the cell membrane. In terms of biological role, negative regulator of FtsZ ring formation; modulates the frequency and position of FtsZ ring formation. Inhibits FtsZ ring formation at polar sites. Interacts either with FtsZ or with one of its binding partners to promote depolymerization. The protein is Septation ring formation regulator EzrA of Streptococcus pyogenes serotype M6 (strain ATCC BAA-946 / MGAS10394).